A 212-amino-acid polypeptide reads, in one-letter code: EFC-associated protein OPG053 (212 aa).

Topologically, residues 1–175 (MAETKEFKTL…IIENRLPYYD (175 aa)) are virion surface. 3 disulfides stabilise this stretch: C33/C55, C47/C127, and C107/C149. A helical transmembrane segment spans residues 176-196 (PWFLVGVAIILVIFTVAICSI). Over 197–212 (RRNLALKYRYGTFLYV) the chain is Intravirion.

Belongs to the orthopoxvirus OPG053 family. In terms of assembly, component of the entry fusion complex (EFC) composed of OPG053, OPG076, OPG086, OPG094, OPG095, OPG099, OPG107, OPG143, OPG104, OPG147 and OPG155. Except for OPG095 and OPG052, each of the EFC proteins is required for assembly or stability of the complex. In terms of processing, disulfid bonds are oxidized in the cytoplasm by OPG088 protein. Post-translationally, unglycosylated because produced in viral factories instead of the classic ER -Golgi route.

The protein resides in the virion membrane. Component of the entry fusion complex (EFC), which consists of 11 proteins. During cell infection, this complex mediates entry of the virion core into the host cytoplasm by a two-step mechanism consisting of lipid mixing of the viral and cellular membranes and subsequent pore formation. In Monkeypox virus, this protein is EFC-associated protein OPG053 (OPG053).